Here is a 163-residue protein sequence, read N- to C-terminus: Crossover junction endodeoxyribonuclease RuvC (163 aa).

Active-site residues include D8, E68, and D140. D8, E68, and D140 together coordinate Mg(2+).

This sequence belongs to the RuvC family. In terms of assembly, homodimer which binds Holliday junction (HJ) DNA. The HJ becomes 2-fold symmetrical on binding to RuvC with unstacked arms; it has a different conformation from HJ DNA in complex with RuvA. In the full resolvosome a probable DNA-RuvA(4)-RuvB(12)-RuvC(2) complex forms which resolves the HJ. Mg(2+) serves as cofactor.

Its subcellular location is the cytoplasm. The enzyme catalyses Endonucleolytic cleavage at a junction such as a reciprocal single-stranded crossover between two homologous DNA duplexes (Holliday junction).. Its function is as follows. The RuvA-RuvB-RuvC complex processes Holliday junction (HJ) DNA during genetic recombination and DNA repair. Endonuclease that resolves HJ intermediates. Cleaves cruciform DNA by making single-stranded nicks across the HJ at symmetrical positions within the homologous arms, yielding a 5'-phosphate and a 3'-hydroxyl group; requires a central core of homology in the junction. The consensus cleavage sequence is 5'-(A/T)TT(C/G)-3'. Cleavage occurs on the 3'-side of the TT dinucleotide at the point of strand exchange. HJ branch migration catalyzed by RuvA-RuvB allows RuvC to scan DNA until it finds its consensus sequence, where it cleaves and resolves the cruciform DNA. This Erythrobacter litoralis (strain HTCC2594) protein is Crossover junction endodeoxyribonuclease RuvC.